The chain runs to 715 residues: Scinderin (715 aa).

Residues methionine 1 to glutamate 363 form an actin-severing region. Residues leucine 27–alanine 77 form a Gelsolin-like 1 repeat. Tyrosine 102 is subject to Phosphotyrosine. Residues lysine 112–alanine 119 and arginine 138–arginine 146 contribute to the a 1,2-diacyl-sn-glycero-3-phospho-(1D-myo-inositol-4,5-bisphosphate) site. 4 Gelsolin-like repeats span residues valine 148–leucine 188, leucine 265–lysine 307, valine 398–threonine 451, and threonine 523–lysine 564. The interval lysine 364 to tryptophan 715 is actin-binding, Ca-sensitive. The tract at residues lysine 364–tryptophan 715 is ca(2+)-dependent actin binding. Ca(2+) is bound by residues asparagine 538, aspartate 539, and glutamate 562. Tyrosine 599 carries the phosphotyrosine modification. A Gelsolin-like 6 repeat occupies phenylalanine 626–serine 668. Ca(2+)-binding residues include aspartate 643, aspartate 644, and glutamate 666.

The protein belongs to the villin/gelsolin family. The N-terminus is blocked. In the adrenal gland, expressed in the medulla but, in the cortex, found only in diffuse parts.

It localises to the cytoplasm. The protein localises to the cytoskeleton. Its subcellular location is the cell projection. It is found in the podosome. Ca(2+)-dependent actin filament-severing protein that has a regulatory function in exocytosis by affecting the organization of the microfilament network underneath the plasma membrane. In vitro, also has barbed end capping and nucleating activities in the presence of Ca(2+). Severing activity is inhibited by phosphatidylinositol 4,5-bis-phosphate (PIP2). Required for megakaryocyte differentiation, maturation, polyploidization and apoptosis with the release of platelet-like particles. Plays a role in osteoclastogenesis (OCG) and actin cytoskeletal organization in osteoclasts. Regulates chondrocyte proliferation and differentiation. Inhibits cell proliferation and tumorigenesis. Signaling is mediated by MAPK, p38 and JNK pathways. This is Scinderin from Bos taurus (Bovine).